The sequence spans 497 residues: MAVAKTEMLVSPLQISDPFSSFPHSPTMDNYPKLEEMMLLNAGGPQFLGASVPDGSGFNSTVEGAEQFDHLTADAFSEMSLSSEKALVESSYANQTTRLPSLTYTGRFSLEPATNSSNTLWPEPLFSLVSGLVGMANISPSSAPSSSPSSSSSSSSSQSPPLSCSVQSNDSSPIYSAAPTFPNSSSEIFPDHSPQPFQNASIPYPPPAYPVSKTTFQVPMIPDYLFPQQQGDVSLVSADQKPFQAMESRTQQPSLTPLSTIKAYATHTSQDLKTINSTYQSQIIKPSRMRKYPNRPSKTPPHERPYGCPVESCDRRFSRSDELTRHIRIHTGQKPFQCRICMRNFSRSDHLTTHIRTHTGEKPFACDICGRKFARSDERKRHTKIHLRQKDKKADKATPVSVASPVSSYSPSASTSYPSPVPTSYSSPVSSSYPSPVHSSFPSPTTAVTYPSVTSTFQTHGITSFPSSIMTNAFSSPMSSALSDMSLTYSPRTIEIC.

Low complexity predominate over residues 139-165 (SPSSAPSSSPSSSSSSSSSQSPPLSCS). Disordered regions lie at residues 139-169 (SPSSAPSSSPSSSSSSSSSQSPPLSCSVQSN), 175-194 (YSAAPTFPNSSSEIFPDHSP), and 286-309 (PSRMRKYPNRPSKTPPHERPYGCP). C2H2-type zinc fingers lie at residues 306 to 330 (YGCPVESCDRRFSRSDELTRHIRIH), 336 to 358 (FQCRICMRNFSRSDHLTTHIRTH), and 364 to 386 (FACDICGRKFARSDERKRHTKIH). Residues 377–441 (DERKRHTKIH…SYPSPVHSSF (65 aa)) are disordered. Residues 381–391 (RHTKIHLRQKD) show a composition bias toward basic residues. Positions 397-441 (ATPVSVASPVSSYSPSASTSYPSPVPTSYSSPVSSSYPSPVHSSF) are enriched in low complexity.

The protein belongs to the EGR C2H2-type zinc-finger protein family. As to expression, expressed in the presumptive mesoderm. In blastula embryos, expressed in the dorsal marginal zone, and at the onset of gastrulation expression is specific to the Spemann organizer. As gastrulation proceeds, expressed in a ring around the yolk plug. This expression is maintained in advanced gastrulae, with weak expression also extending into the dorsal midline. By the neurula stage, expression is excluded from the notochord. In late tailbud stages, expressed in two spots in the anterior forebrain, which are connected via a bridge of cells that also show expression.

The protein resides in the nucleus. Its subcellular location is the cytoplasm. Its function is as follows. Transcriptional regulator. Recognizes and binds to the DNA sequence 5'-GCG(T/G)GGGCG-3'(EGR-site) in the promoter region of target genes. Binds double-stranded target DNA, irrespective of the cytosine methylation status. Regulates the transcription of numerous target genes, and thereby plays an important role in regulating the response to growth factors, DNA damage, and ischemia. Plays a role in the regulation of cell survival, proliferation and cell death. Mediates responses to ischemia and hypoxia; regulates the expression of proteins that are involved in inflammatory processes. Plays a role in regulating the expression of circadian clock genes. The protein is Early growth response protein 1-A (egr1-a) of Xenopus laevis (African clawed frog).